Consider the following 112-residue polypeptide: Large ribosomal subunit protein P2 (112 aa).

The segment covering 69 to 85 has biased composition (low complexity); that stretch reads AGGAAMPAAAAGGAPAA. A disordered region spans residues 69-112; sequence AGGAAMPAAAAGGAPAAAEDKAEAKKPEAEPEEEEDDMGFSLFD. Basic and acidic residues predominate over residues 86 to 97; it reads AEDKAEAKKPEA.

The protein belongs to the eukaryotic ribosomal protein P1/P2 family. As to quaternary structure, P1 and P2 exist as dimers at the large ribosomal subunit. Phosphorylated.

Functionally, plays an important role in the elongation step of protein synthesis. The protein is Large ribosomal subunit protein P2 of Babesia bovis.